Consider the following 104-residue polypeptide: Large ribosomal subunit protein bL21 (104 aa).

This sequence belongs to the bacterial ribosomal protein bL21 family. In terms of assembly, part of the 50S ribosomal subunit. Contacts protein L20.

In terms of biological role, this protein binds to 23S rRNA in the presence of protein L20. The chain is Large ribosomal subunit protein bL21 from Lactococcus lactis subsp. lactis (strain IL1403) (Streptococcus lactis).